The following is a 153-amino-acid chain: SsrA-binding protein (153 aa).

The segment at 129–153 (KREDMKKKDQSREMAQALREKSKSH) is disordered.

It belongs to the SmpB family.

It is found in the cytoplasm. In terms of biological role, required for rescue of stalled ribosomes mediated by trans-translation. Binds to transfer-messenger RNA (tmRNA), required for stable association of tmRNA with ribosomes. tmRNA and SmpB together mimic tRNA shape, replacing the anticodon stem-loop with SmpB. tmRNA is encoded by the ssrA gene; the 2 termini fold to resemble tRNA(Ala) and it encodes a 'tag peptide', a short internal open reading frame. During trans-translation Ala-aminoacylated tmRNA acts like a tRNA, entering the A-site of stalled ribosomes, displacing the stalled mRNA. The ribosome then switches to translate the ORF on the tmRNA; the nascent peptide is terminated with the 'tag peptide' encoded by the tmRNA and targeted for degradation. The ribosome is freed to recommence translation, which seems to be the essential function of trans-translation. This chain is SsrA-binding protein, found in Geobacter sulfurreducens (strain ATCC 51573 / DSM 12127 / PCA).